A 232-amino-acid chain; its full sequence is Anti-sigma-K factor RskA (232 aa).

Topologically, residues 1–91 (MTEPTDFQLL…QSRRQPRWRT (91 aa)) are cytoplasmic. The chain crosses the membrane as a helical span at residues 92 to 112 (AVFASAAAIAVGLGAFGLGVL). The Extracellular portion of the chain corresponds to 113-232 (TRPSASPTVA…GTVLAELPLR (120 aa)).

This sequence belongs to the anti-sigma-K factor family.

It is found in the cell membrane. Functionally, an anti-sigma factor for extracytoplasmic function (ECF) sigma factor SigK. ECF sigma factors are held in an inactive form by an anti-sigma factor until released by regulated intramembrane proteolysis (RIP). RIP occurs when an extracytoplasmic signal triggers a concerted proteolytic cascade to transmit information and elicit cellular responses. The membrane-spanning regulatory substrate protein is first cut extracytoplasmically (site-1 protease, S1P), then within the membrane itself (site-2 protease, S2P, Rip1), while cytoplasmic proteases finish degrading the regulatory protein, liberating the sigma factor. The polypeptide is Anti-sigma-K factor RskA (rskA) (Mycobacterium ulcerans (strain Agy99)).